A 226-amino-acid chain; its full sequence is ATP synthase F(0) complex subunit a (226 aa).

The next 6 helical transmembrane spans lie at 6–26 (FASF…IIMF), 68–88 (WTLM…LGLL), 97–117 (QLSM…ITGF), 138–158 (IPML…ALAV), 164–184 (ITAG…LMNI), and 189–209 (ATIT…VALI).

It belongs to the ATPase A chain family. As to quaternary structure, component of the ATP synthase complex composed at least of ATP5F1A/subunit alpha, ATP5F1B/subunit beta, ATP5MC1/subunit c (homooctomer), MT-ATP6/subunit a, MT-ATP8/subunit 8, ATP5ME/subunit e, ATP5MF/subunit f, ATP5MG/subunit g, ATP5MK/subunit k, ATP5MJ/subunit j, ATP5F1C/subunit gamma, ATP5F1D/subunit delta, ATP5F1E/subunit epsilon, ATP5PF/subunit F6, ATP5PB/subunit b, ATP5PD/subunit d, ATP5PO/subunit OSCP. ATP synthase complex consists of a soluble F(1) head domain (subunits alpha(3) and beta(3)) - the catalytic core - and a membrane F(0) domain - the membrane proton channel (subunits c, a, 8, e, f, g, k and j). These two domains are linked by a central stalk (subunits gamma, delta, and epsilon) rotating inside the F1 region and a stationary peripheral stalk (subunits F6, b, d, and OSCP). Interacts with DNAJC30; interaction is direct.

It localises to the mitochondrion inner membrane. It carries out the reaction H(+)(in) = H(+)(out). Its function is as follows. Subunit a, of the mitochondrial membrane ATP synthase complex (F(1)F(0) ATP synthase or Complex V) that produces ATP from ADP in the presence of a proton gradient across the membrane which is generated by electron transport complexes of the respiratory chain. ATP synthase complex consist of a soluble F(1) head domain - the catalytic core - and a membrane F(1) domain - the membrane proton channel. These two domains are linked by a central stalk rotating inside the F(1) region and a stationary peripheral stalk. During catalysis, ATP synthesis in the catalytic domain of F(1) is coupled via a rotary mechanism of the central stalk subunits to proton translocation. With the subunit c (ATP5MC1), forms the proton-conducting channel in the F(0) domain, that contains two crucial half-channels (inlet and outlet) that facilitate proton movement from the mitochondrial intermembrane space (IMS) into the matrix. Protons are taken up via the inlet half-channel and released through the outlet half-channel, following a Grotthuss mechanism. The chain is ATP synthase F(0) complex subunit a from Mus musculus (Mouse).